We begin with the raw amino-acid sequence, 120 residues long: Large ribosomal subunit protein uL14 (120 aa).

Belongs to the universal ribosomal protein uL14 family. Part of the 50S ribosomal subunit. Forms a cluster with proteins L3 and L19. In the 70S ribosome, L14 and L19 interact and together make contacts with the 16S rRNA in bridges B5 and B8.

Binds to 23S rRNA. Forms part of two intersubunit bridges in the 70S ribosome. The protein is Large ribosomal subunit protein uL14 of Phytoplasma australiense.